The following is a 1561-amino-acid chain: Formin-E (1561 aa).

A compositionally biased stretch (low complexity) spans 1–28; sequence MDNHSSSSNPSSLSSSSSSSSSSSSFLS. Disordered regions lie at residues 1-63, 77-187, 211-279, and 305-365; these read MDNH…EEKP, EEEE…GKLS, PIIV…SSED, and ILRS…NLNY. Residues 29–51 are compositionally biased toward basic and acidic residues; it reads DHVKKEEQNGLDTIKEEIENKIE. Positions 32-85 form a coiled coil; that stretch reads KKEEQNGLDTIKEEIENKIENEEEEEKIEEKPIEKVEEEKIIVQKEEEEKIEEE. Over residues 80–89 the composition is skewed to acidic residues; the sequence is EKIEEEPIEK. Polar residues predominate over residues 103-120; sequence DNINTTVEAKTLETSTEP. Positions 158-208 form a coiled coil; that stretch reads EQQEQQEKQKEETKPSIREEVKEKIKGKLSEIKEEIKDIKEEIKHVIREEV. A compositionally biased stretch (basic and acidic residues) spans 162-187; it reads QQEKQKEETKPSIREEVKEKIKGKLS. Over residues 220–229 the composition is skewed to pro residues; it reads SPPPPPPPPS. The span at 230–258 shows a compositional bias: low complexity; the sequence is ITVQSSSPVSSQISSPVSSPVSSPKPSVT. Polar residues predominate over residues 305–320; sequence ILRSKSSPNPGANNPN. The span at 326 to 365 shows a compositional bias: low complexity; sequence NNSSSSSSSNNNSDNNNNSDNNSNNNNINNNNSSSNNLNY. Residues 379-427 form a Phorbol-ester/DAG-type zinc finger; that stretch reads YHDFKIHRGTSSCVYCGENTRLWSTSYKCFFCGVVCHKKCLDSMNTIPC. Low complexity predominate over residues 465 to 534; the sequence is PSSITNSSSK…TSISSPPIAS (70 aa). The interval 465–549 is disordered; it reads PSSITNSSSK…PLLQQQQQQQ (85 aa). Residues 541 to 573 are a coiled coil; it reads LLQQQQQQQQQQQQQQQQQQQQQQQQQQISTTQ. The GBD/FH3 domain maps to 581–929; the sequence is SEKPDDDMIN…QISLHKGGFE (349 aa). Residues 952 to 989 adopt a coiled-coil conformation; that stretch reads LNRKLGELEKQNIDKAMKIQEQDINIKSLLDLLKQLKD. Disordered stretches follow at residues 1009 to 1092, 1466 to 1508, and 1526 to 1561; these read MEPP…VPKP, EEKR…SDED, and RQAK…PNKN. Positions 1017–1033 are enriched in low complexity; it reads SVKSPDDPNNAAPIVVA. One can recognise an FH1 domain in the interval 1019–1081; sequence KSPDDPNNAA…LGAKKPPAGV (63 aa). Residues 1034–1070 are compositionally biased toward pro residues; that stretch reads PIPPPPPPISGAPPPPPPPPPPMKGGAGPPPPPPPPG. A compositionally biased stretch (low complexity) spans 1071 to 1081; that stretch reads KLGAKKPPAGV. Residues 1086-1475 enclose the FH2 domain; sequence PPKVPKPSHP…EEKRLQQKQQ (390 aa). A coiled-coil region spans residues 1398 to 1491; that stretch reads LATASTEVEK…RKLTTSNESA (94 aa). Over residues 1466–1481 the composition is skewed to basic and acidic residues; the sequence is EEKRLQQKQQRQERAV. Polar residues-rich tracts occupy residues 1484–1498 and 1536–1561; these read LTTS…PNHA and HQIA…PNKN. The region spanning 1488 to 1518 is the DAD domain; sequence NESASASPNHAKSTDDKSDEDDDIVNDLLMA.

This sequence belongs to the formin homology family. Diaphanous subfamily. In terms of assembly, interacts (via GBD/FH3 domain) with activated Rho-GTPases.

Its function is as follows. Formins play an important role in the nucleation of actin and the formation of linear actin filaments. This Dictyostelium discoideum (Social amoeba) protein is Formin-E (forE).